We begin with the raw amino-acid sequence, 160 residues long: ATP synthase subunit b (160 aa).

Residues 12-32 traverse the membrane as a helical segment; that stretch reads ISFVLFVWFCMKYVWYPFISI.

It belongs to the ATPase B chain family. As to quaternary structure, F-type ATPases have 2 components, F(1) - the catalytic core - and F(0) - the membrane proton channel. F(1) has five subunits: alpha(3), beta(3), gamma(1), delta(1), epsilon(1). F(0) has three main subunits: a(1), b(2) and c(10-14). The alpha and beta chains form an alternating ring which encloses part of the gamma chain. F(1) is attached to F(0) by a central stalk formed by the gamma and epsilon chains, while a peripheral stalk is formed by the delta and b chains.

Its subcellular location is the cell inner membrane. F(1)F(0) ATP synthase produces ATP from ADP in the presence of a proton or sodium gradient. F-type ATPases consist of two structural domains, F(1) containing the extramembraneous catalytic core and F(0) containing the membrane proton channel, linked together by a central stalk and a peripheral stalk. During catalysis, ATP synthesis in the catalytic domain of F(1) is coupled via a rotary mechanism of the central stalk subunits to proton translocation. Its function is as follows. Component of the F(0) channel, it forms part of the peripheral stalk, linking F(1) to F(0). The polypeptide is ATP synthase subunit b (Blochmanniella pennsylvanica (strain BPEN)).